The sequence spans 1272 residues: Myosin-3 (1272 aa).

The interval 1 to 20 (MAVIKKGARRKDVKEPKKRS) is disordered. The Myosin motor domain maps to 36-715 (VGISDLTLLS…SLFALEDMRD (680 aa)). 129-136 (GESGAGKT) is an ATP binding site. Residue Ser-357 is modified to Phosphoserine. The actin-binding stretch occupies residues 588–610 (ANELVETLSKAEPSYIRTIKPNQ). 2 consecutive IQ domains span residues 719-739 (YNMA…RIDA) and 740-765 (AIKI…YGTK). One can recognise a TH1 domain in the interval 771 to 961 (KERRSMSLLG…TIYVRRGHPA (191 aa)). Disordered regions lie at residues 951-1015 (STIY…QKPV), 1029-1141 (YNPK…SELP), and 1217-1272 (VQFG…DDDW). Residues 980 to 1000 (IKSKKSKHKSTHKHTHSHRSH) show a composition bias toward basic residues. The span at 1066–1078 (KKASSSHKSSSAK) shows a compositional bias: low complexity. A compositionally biased stretch (basic and acidic residues) spans 1089 to 1098 (GVEKNKEPLK). Over residues 1109 to 1118 (PIPPPPPPMG) the composition is skewed to pro residues. Positions 1120–1182 (PKDPKFEAAY…PTAYMTPYKD (63 aa)) constitute an SH3 domain. A compositionally biased stretch (polar residues) spans 1217–1236 (VQFGSATVGPTSDNQSNPVG). A compositionally biased stretch (acidic residues) spans 1258–1272 (ADDDDNDDGDDDDDW).

The protein belongs to the TRAFAC class myosin-kinesin ATPase superfamily. Myosin family. Interacts (via myosin motor domain) with SHE4; this interaction is important for proper localization and may regulate the interaction of the motor domain with actin. Interacts (via SH3 domain) with VRP1; this interaction is required for localization to sites of polarized growth and may regulate the interaction of the tail domain with actin. Interacts (via SH3 domain) with PAN1; this interaction is important for late stages of endocytopsis. Interacts (via SH3 domain) with BBC1 and LAS17. Interacts (via C-terminal acidic tail) with ARC19 and ARC40; ARC19 and ARC40 are Arp2/3 complex subunits. Phosphorylation of the TEDS site (Ser-357) is required for the polarization of the actin cytoskeleton and for ligand-induced, but not for constitutive internalization of STE2. Phosphorylation probably activates the myosin-I ATPase. Ser-357 is phosphorylated by CLA4 and STE20 in vitro.

It localises to the cytoplasm. It is found in the cytoskeleton. Its subcellular location is the actin patch. Its function is as follows. One of two redundant type-I myosins implicated in the organization of the actin cytoskeleton. Required for proper actin cytoskeleton polarization and for the internalization step in endocytosis. At the cell cortex, assembles in patch-like structures together with proteins from the actin-polymerizing machinery and promotes actin assembly. Functions redundantly with LAS17 as actin nucleation-promoting factor (NPF) for the Arp2/3 complex. Motor domain phosphorylation by PAK kinases CLA4 and STE20 promotes CDC42-regulated actin assembly. Functions together with the NPF PAN1 in late stages of endocytosis. Motor domain phosphorylation by PDK1 kinases PKH1 and PKH2, and by SGK kinases YPK1 and YPK2, promotes ligand-induced, but not constitutive endocytosis of the G protein-coupled receptor STE2. This Saccharomyces cerevisiae (strain ATCC 204508 / S288c) (Baker's yeast) protein is Myosin-3 (MYO3).